A 624-amino-acid polypeptide reads, in one-letter code: Multicopper oxidase elcG (624 aa).

The signal sequence occupies residues 1 to 18 (MACNILNFLTGLLSLSST). 2 consecutive Plastocyanin-like domains span residues 48–160 (PGRA…IERG) and 216–373 (CMDA…TIRI). A glycan (N-linked (GlcNAc...) asparagine) is linked at N65. H96, H98, H140, and H142 together coordinate Cu cation. 3 N-linked (GlcNAc...) asparagine glycosylation sites follow: N271, N296, and N464. The region spanning 474–603 (FLFQDPSQIE…GGMGVVILDG (130 aa)) is the Plastocyanin-like 3 domain. Cu cation-binding residues include H511, H514, H516, H585, C586, H587, and H591.

It belongs to the multicopper oxidase family.

It participates in secondary metabolite biosynthesis. Multicopper oxidase; part of the gene cluster that mediates the biosynthesis of elsinochrome C, a perelyenequinone phytotoxin structurally similar to cercosporin. The first step of elsinochrome C biosynthesis is performed by the polyketide synthase elcA which catalyzes the formation of nor-toralactone. The starter unit acyltransferase (SAT) domain of elcA initiates polyketide extension by the selective utilization of acetyl-CoA, which is elongated to the heptaketide in the beta-ketoacyl synthase (KS) domain by successive condensations with six malonyl units introduced by the malonyl acyltransferase (MAT) domain. The product template (PT) domain catalyzes C4-C9 and C2-C11 aldol cyclizations and dehydrations to a trihydroxynaphthalene, which is thought to be delivered to the thioesterase (TE) domain for product release. The bifunctional enzyme elcB then methylates nor-toralactone to toralactone before conducting an unusual oxidative aromatic ring opening. The next step in perylenequinone biosynthesis is an O-methylation at the nascent OH-6 of the elcB product performed by the O-methyltransferase elcD. The oxidative coupling of the two monomeric naphthol units in perylenequinone biosynthesis is catalyzed by the FAD-dependent monooxygenase elcE and the multicopper oxidase elcG. ElcG might catalyze the first intermolecular coupling in a regio- and stereo-selective manner via a phenol radical coupling mechanism and the elcE could forge the second C-C bond intramolecularly via a hydride transfer mechanism. The fasciclin domain-containing protein elcF might also play a role duting this step. The last piece of the puzzle in the biosynthesis of elsinochrome C is the additional annulation by enolate coupling to afford the dihydrobenzo(ghi)perylenequinone system, catalyzed by the FAD-dependent monooxygenase elcH. The protein is Multicopper oxidase elcG of Phaeosphaeria nodorum (strain SN15 / ATCC MYA-4574 / FGSC 10173) (Glume blotch fungus).